Consider the following 630-residue polypeptide: Probable potassium transport system protein Kup (630 aa).

The next 12 helical transmembrane spans lie at 17 to 37 (LAIAAIGVVFGDIGTSPLYSL), 51 to 71 (PSAILGVISLLFWAIILVVGI), 105 to 125 (ITGLMMALGIFGACMFYGDAV), 144 to 164 (PQLSHLVLPITIVILIALFWI), 175 to 195 (LFGPIMVLWFVTIAVLGIYHI), 218 to 238 (VLLAYVVLGSVVLVLTGAEAL), 255 to 275 (YVLVMPSLVLNYFGQGALLLL), 283 to 303 (PFFLLAPQWAALPLVVLSTVA), 344 to 364 (IYVPVVNWLLLFVILCIVIGF), 374 to 394 (YGIAVTATMVITTILAAVVMV), 402 to 422 (LLVAMIIGVFLVIDLGFFGAN), and 428 to 448 (QGGWLPLGIGALLFFLLMTWY).

Belongs to the HAK/KUP transporter (TC 2.A.72) family.

The protein localises to the cell inner membrane. It carries out the reaction K(+)(in) + H(+)(in) = K(+)(out) + H(+)(out). In terms of biological role, transport of potassium into the cell. Likely operates as a K(+):H(+) symporter. This is Probable potassium transport system protein Kup from Burkholderia pseudomallei (strain K96243).